A 211-amino-acid polypeptide reads, in one-letter code: Leucyl/phenylalanyl-tRNA--protein transferase (211 aa).

It belongs to the L/F-transferase family.

The protein resides in the cytoplasm. It carries out the reaction N-terminal L-lysyl-[protein] + L-leucyl-tRNA(Leu) = N-terminal L-leucyl-L-lysyl-[protein] + tRNA(Leu) + H(+). It catalyses the reaction N-terminal L-arginyl-[protein] + L-leucyl-tRNA(Leu) = N-terminal L-leucyl-L-arginyl-[protein] + tRNA(Leu) + H(+). The catalysed reaction is L-phenylalanyl-tRNA(Phe) + an N-terminal L-alpha-aminoacyl-[protein] = an N-terminal L-phenylalanyl-L-alpha-aminoacyl-[protein] + tRNA(Phe). Its function is as follows. Functions in the N-end rule pathway of protein degradation where it conjugates Leu, Phe and, less efficiently, Met from aminoacyl-tRNAs to the N-termini of proteins containing an N-terminal arginine or lysine. The protein is Leucyl/phenylalanyl-tRNA--protein transferase of Flavobacterium psychrophilum (strain ATCC 49511 / DSM 21280 / CIP 103535 / JIP02/86).